A 294-amino-acid chain; its full sequence is Phosphoprotein (294 aa).

The binding to monomeric RNA-free nucleoprotein stretch occupies residues 12–28 (MGNEAAKAAEAFQRSLK). Positions 52 to 97 (KPTISKSTKVTTPPERRNAWGEKPDTTRNQTEEARNEATLEDTSRL) are disordered. Over residues 65–97 (PERRNAWGEKPDTTRNQTEEARNEATLEDTSRL) the composition is skewed to basic and acidic residues. Serine 106 bears the Phosphoserine mark. Positions 123–128 (KKKVTF) are binding to host phosphatase PP1. A binding to protein M2-1 region spans residues 135 to 157 (RYTKLEMEALELLSDNEDDDAES). 5 positions are modified to phosphoserine: serine 148, serine 157, serine 158, serine 168, and serine 171. The interval 169–194 (ALSLEARLESIDEKLSMILGLLRTLN) is oligomerization and binding to RNA-directed RNA polymerase L. The interval 234 to 294 (MKEEAKQKSK…PDDDLYSLTM (61 aa)) is disordered. The segment at 251 to 279 (LTEKAKELNKIVEDESTSGESEEEEEEED) is binding to RNA-directed RNA polymerase L. A compositionally biased stretch (basic and acidic residues) spans 253-263 (EKAKELNKIVE). Positions 264–294 (DESTSGESEEEEEEEDEEESNPDDDLYSLTM) are enriched in acidic residues. The interval 281-294 (EESNPDDDLYSLTM) is binding to the N-RNA complex.

This sequence belongs to the pneumoviridae phosphoprotein P family. Homotetramer. Interacts with protein M2-1; the interaction between the two tetramers is required for the anti-termination and elongation transcriptional activities of protein M2-1. Interacts with host phosphatase PP1; this interaction recruits PP1 to the inclusion bodies. Formation of a complex PP1/M2-1/P allows P to target host PP1 phosphatase to the M2-1 substrate. Interacts with the nucleoprotein N; the phosphorylated phosphoprotein P binds to N-RNA complex. Interacts with the monomeric RNA-free nucleoprotein N. Interacts with RNA-directed RNA polymerase L (via N-terminus); the association of P and L forms the polymerase complex. In terms of processing, constitutively phosphorylated by host.

The protein resides in the virion. The protein localises to the host cytoplasm. Its function is as follows. Plays critical roles in regulating RNA replication and transcription through its interactions with multiple proteins. Tethers the RNA-directed RNA polymerase L to the nucleoprotein-RNA complex. Recruits the M2-1 protein, a processivity factor that is required for efficient transcription of viral RNA. Acts as a chaperone for neo-synthesized nucleoprotein by forming an N-P complex that preserves N in a monomeric and RNA-free state and prevents the association of nascent N with host cell RNAs. Recruits the host phosphatase PP1 to inclusion bodies to regulate viral transcription. The polypeptide is Phosphoprotein (Avian metapneumovirus (isolate Canada goose/Minnesota/15a/2001) (AMPV)).